We begin with the raw amino-acid sequence, 37 residues long: Omega/M-ectatotoxin-Et1a subunit A (37 aa).

An intrachain disulfide couples cysteine 12 to cysteine 34.

It belongs to the ectatomin family. Ectatomin-Et subfamily. In terms of assembly, heterodimer of an A and a B chain; disulfide-linked. As to expression, expressed by the venom gland.

The protein localises to the secreted. Its subcellular location is the target cell membrane. Algogenic for animals, human and insects. At high concentrations (0.5-1 uM), it acts as a pore-forming protein that forms nonselective cation channels both in cell and artificial membranes. It is weakly selective for cation over anions channel conductance is identical in both directions. At lower concentrations (1-10 nM), this heterodimer inhibits cardiac L-type calcium currents in isolated rat cardiac ventricular myocytes. The polypeptide is Omega/M-ectatotoxin-Et1a subunit A (Ectatomma tuberculatum (Selva ant)).